Consider the following 226-residue polypeptide: Cytidylate kinase (226 aa).

12–20 serves as a coordination point for ATP; it reads GPSGAGKGT.

This sequence belongs to the cytidylate kinase family. Type 1 subfamily.

It is found in the cytoplasm. It catalyses the reaction CMP + ATP = CDP + ADP. The catalysed reaction is dCMP + ATP = dCDP + ADP. The protein is Cytidylate kinase of Colwellia psychrerythraea (strain 34H / ATCC BAA-681) (Vibrio psychroerythus).